The primary structure comprises 163 residues: Transcriptional repressor NrdR (163 aa).

Residues 3–34 (CPFCAYADTRVVDSRLADDGGSVRRRRECPQC) fold into a zinc finger. The ATP-cone domain occupies 49–139 (PVVVKTDGRR…VYRRFEDVDA (91 aa)).

The protein belongs to the NrdR family. Requires Zn(2+) as cofactor.

In terms of biological role, negatively regulates transcription of bacterial ribonucleotide reductase nrd genes and operons by binding to NrdR-boxes. The protein is Transcriptional repressor NrdR of Acidithiobacillus ferrooxidans (strain ATCC 23270 / DSM 14882 / CIP 104768 / NCIMB 8455) (Ferrobacillus ferrooxidans (strain ATCC 23270)).